We begin with the raw amino-acid sequence, 303 residues long: Albumin b-32 (303 aa).

Residues A112 to R137 are compositionally biased toward low complexity. The tract at residues A112–D175 is disordered. Basic and acidic residues predominate over residues A146–G156.

Belongs to the ribosome-inactivating protein family. Type 1 RIP subfamily. In terms of assembly, monomer. In terms of tissue distribution, endosperm.

It is found in the cytoplasm. The enzyme catalyses Endohydrolysis of the N-glycosidic bond at one specific adenosine on the 28S rRNA.. In terms of biological role, a possible regulatory factor for the synthesis of zeins, the major group of storage proteins. This is Albumin b-32 (O6) from Zea mays (Maize).